The sequence spans 1099 residues: Carbamoyl phosphate synthase large chain (1099 aa).

The segment at 1–402 (MPRREDIKRI…ALGKALRSLE (402 aa)) is carboxyphosphate synthetic domain. Positions 129, 169, 175, 176, 208, 210, 215, 241, 242, 243, 285, and 299 each coordinate ATP. The ATP-grasp 1 domain maps to 133-328 (KKTMEEAGLE…IAKIAALLAV (196 aa)). Mg(2+) contacts are provided by glutamine 285, glutamate 299, and asparagine 301. Positions 285, 299, and 301 each coordinate Mn(2+). The interval 403–541 (LDAAPKLDLD…STYNGVENEA (139 aa)) is oligomerization domain. Residues 542 to 944 (IPTDKEKIMI…AFAKAEIAAG (403 aa)) are carbamoyl phosphate synthetic domain. In terms of domain architecture, ATP-grasp 2 spans 666–857 (AKLLKRIGLR…VAKIAAKIMV (192 aa)). Positions 702, 741, 743, 748, 773, 774, 775, 776, 816, and 828 each coordinate ATP. Residues glutamine 816, glutamate 828, and asparagine 830 each contribute to the Mg(2+) site. Residues glutamine 816, glutamate 828, and asparagine 830 each contribute to the Mn(2+) site. An MGS-like domain is found at 945-1099 (NPLPTEGAIL…VRKLTDTWKM (155 aa)). Positions 945–1099 (NPLPTEGAIL…VRKLTDTWKM (155 aa)) are allosteric domain.

Belongs to the CarB family. In terms of assembly, composed of two chains; the small (or glutamine) chain promotes the hydrolysis of glutamine to ammonia, which is used by the large (or ammonia) chain to synthesize carbamoyl phosphate. Tetramer of heterodimers (alpha,beta)4. Mg(2+) serves as cofactor. The cofactor is Mn(2+).

The catalysed reaction is hydrogencarbonate + L-glutamine + 2 ATP + H2O = carbamoyl phosphate + L-glutamate + 2 ADP + phosphate + 2 H(+). It carries out the reaction hydrogencarbonate + NH4(+) + 2 ATP = carbamoyl phosphate + 2 ADP + phosphate + 2 H(+). Its pathway is amino-acid biosynthesis; L-arginine biosynthesis; carbamoyl phosphate from bicarbonate: step 1/1. The protein operates within pyrimidine metabolism; UMP biosynthesis via de novo pathway; (S)-dihydroorotate from bicarbonate: step 1/3. Large subunit of the glutamine-dependent carbamoyl phosphate synthetase (CPSase). CPSase catalyzes the formation of carbamoyl phosphate from the ammonia moiety of glutamine, carbonate, and phosphate donated by ATP, constituting the first step of 2 biosynthetic pathways, one leading to arginine and/or urea and the other to pyrimidine nucleotides. The large subunit (synthetase) binds the substrates ammonia (free or transferred from glutamine from the small subunit), hydrogencarbonate and ATP and carries out an ATP-coupled ligase reaction, activating hydrogencarbonate by forming carboxy phosphate which reacts with ammonia to form carbamoyl phosphate. The chain is Carbamoyl phosphate synthase large chain from Thermotoga neapolitana (strain ATCC 49049 / DSM 4359 / NBRC 107923 / NS-E).